We begin with the raw amino-acid sequence, 696 residues long: GPI mannosyltransferase 4 (696 aa).

6 helical membrane-spanning segments follow: residues 100–120 (WQLE…IYTL), 125–142 (NDYC…RFEI), 149–169 (SSWI…EMAM), 185–205 (NTVV…ESIS), 227–247 (AMST…LFGA), and 338–358 (YVHL…ASLG).

The protein belongs to the glycosyltransferase 22 family. PIGZ subfamily.

Its subcellular location is the endoplasmic reticulum membrane. It functions in the pathway glycolipid biosynthesis; glycosylphosphatidylinositol-anchor biosynthesis. Functionally, mannosyltransferase involved in glycosylphosphatidylinositol-anchor biosynthesis. Transfers a fourth mannose to some trimannosyl-GPIs during GPI precursor assembly. The chain is GPI mannosyltransferase 4 from Drosophila melanogaster (Fruit fly).